Here is a 921-residue protein sequence, read N- to C-terminus: Isoleucine--tRNA ligase (921 aa).

The 'HIGH' region signature appears at 57-67; the sequence is PYANGNIHVGT. Residue Glu551 coordinates L-isoleucyl-5'-AMP. The 'KMSKS' region signature appears at 592–596; the sequence is KMSKS. An ATP-binding site is contributed by Lys595. Zn(2+)-binding residues include Cys885, Cys888, Cys905, and Cys908.

This sequence belongs to the class-I aminoacyl-tRNA synthetase family. IleS type 1 subfamily. As to quaternary structure, monomer. It depends on Zn(2+) as a cofactor.

Its subcellular location is the cytoplasm. The catalysed reaction is tRNA(Ile) + L-isoleucine + ATP = L-isoleucyl-tRNA(Ile) + AMP + diphosphate. In terms of biological role, catalyzes the attachment of isoleucine to tRNA(Ile). As IleRS can inadvertently accommodate and process structurally similar amino acids such as valine, to avoid such errors it has two additional distinct tRNA(Ile)-dependent editing activities. One activity is designated as 'pretransfer' editing and involves the hydrolysis of activated Val-AMP. The other activity is designated 'posttransfer' editing and involves deacylation of mischarged Val-tRNA(Ile). The sequence is that of Isoleucine--tRNA ligase from Kosmotoga olearia (strain ATCC BAA-1733 / DSM 21960 / TBF 19.5.1).